Consider the following 385-residue polypeptide: DNA replication and repair protein RecF (385 aa).

Residue 30–37 (GPNGYGKT) participates in ATP binding.

It belongs to the RecF family.

The protein localises to the cytoplasm. Functionally, the RecF protein is involved in DNA metabolism; it is required for DNA replication and normal SOS inducibility. RecF binds preferentially to single-stranded, linear DNA. It also seems to bind ATP. The sequence is that of DNA replication and repair protein RecF from Mycobacterium bovis (strain ATCC BAA-935 / AF2122/97).